A 1310-amino-acid polypeptide reads, in one-letter code: Multidrug resistance protein 4 (1310 aa).

5 consecutive transmembrane segments (helical) span residues 48-68 (WLDL…GVLT), 125-145 (MVCF…CFFV), 196-216 (KFGI…IGFA), 223-243 (LVIM…AVFA), and 299-319 (GLTV…AFSL). In terms of domain architecture, ABC transmembrane type-1 1 spans 55–368 (AVGIFGSIGC…IAIPLNIFAT (314 aa)). A glycan (N-linked (GlcNAc...) asparagine) is linked at Asn336. Residues 342 to 362 (VMIVFICVLIATQGLSIIAIP) form a helical membrane-spanning segment. The N-linked (GlcNAc...) asparagine glycan is linked to Asn402. The region spanning 403–642 (ITLEDVQFRY…KGTYYGLVKR (240 aa)) is the ABC transporter 1 domain. 438–445 (GASGCGKS) lines the ATP pocket. Asn608 is a glycosylation site (N-linked (GlcNAc...) asparagine). 2 consecutive transmembrane segments (helical) span residues 721–741 (WFLS…FPFF) and 773–793 (IIVV…IGLF). The ABC transmembrane type-1 2 domain occupies 722–1030 (FLSTFGFIGG…LGNIVPDIGK (309 aa)). Residue Asn816 is glycosylated (N-linked (GlcNAc...) asparagine). Transmembrane regions (helical) follow at residues 849 to 869 (VGNV…AFYY), 871 to 891 (WKVS…VFIN), and 945 to 965 (IGIY…TLLT). The ABC transporter 2 domain maps to 1065 to 1304 (IEFKDICFRY…KGFYYTLAMQ (240 aa)). An ATP-binding site is contributed by 1100 to 1107 (GASGCGKS).

Belongs to the ABC transporter superfamily. ABCB family. Multidrug resistance exporter (TC 3.A.1.201) subfamily.

It is found in the membrane. It catalyses the reaction ATP + H2O + xenobioticSide 1 = ADP + phosphate + xenobioticSide 2.. Its function is as follows. Energy-dependent efflux pump responsible for decreased drug accumulation in multidrug resistance parasites. The protein is Multidrug resistance protein 4 of Entamoeba histolytica (strain ATCC 30459 / HM-1:IMSS / ABRM).